A 297-amino-acid chain; its full sequence is CASP-like protein 2U8 (297 aa).

The Cytoplasmic portion of the chain corresponds to 1-10 (MLELYEKRRA). The chain crosses the membrane as a helical span at residues 11 to 31 (LLLLRLAAMFLSLAALLITVL). Residues 32–64 (NREDGFFSINVFGSPQPILAKATADFTLVKGLK) lie on the Extracellular side of the membrane. Residues 65-85 (FFAGAMGIVAGYSFLQLAIAM) traverse the membrane as a helical segment. Topologically, residues 86-101 (ASIFSGAPSILGGKRM) are cytoplasmic. Residues 102-122 (AWLCFVGDMTASHLCAAAAAV) traverse the membrane as a helical segment. The Extracellular segment spans residues 123–148 (SAQLAYLGKRGAPMWSAVCTYFSHYC). The helical transmembrane segment at 149–169 (LVFGLAVILAFLATLAALLVA) threads the bilayer. At 170 to 297 (SISSYHLAYD…RVLEMETPCK (128 aa)) the chain is on the cytoplasmic side.

This sequence belongs to the Casparian strip membrane proteins (CASP) family. As to quaternary structure, homodimer and heterodimers.

It is found in the cell membrane. The polypeptide is CASP-like protein 2U8 (Selaginella moellendorffii (Spikemoss)).